The sequence spans 160 residues: Transcription elongation factor GreA (160 aa).

A coiled-coil region spans residues 50-70 (AAREQQSFNEGRIQELEAKLS).

It belongs to the GreA/GreB family.

In terms of biological role, necessary for efficient RNA polymerase transcription elongation past template-encoded arresting sites. The arresting sites in DNA have the property of trapping a certain fraction of elongating RNA polymerases that pass through, resulting in locked ternary complexes. Cleavage of the nascent transcript by cleavage factors such as GreA or GreB allows the resumption of elongation from the new 3'terminus. GreA releases sequences of 2 to 3 nucleotides. The protein is Transcription elongation factor GreA of Legionella pneumophila (strain Paris).